A 135-amino-acid polypeptide reads, in one-letter code: Protein NrdI (135 aa).

This sequence belongs to the NrdI family.

In terms of biological role, probably involved in ribonucleotide reductase function. The polypeptide is Protein NrdI (Pectobacterium carotovorum subsp. carotovorum (strain PC1)).